A 586-amino-acid chain; its full sequence is CTP synthase (586 aa).

Residues 1-278 (MRKHPQTATK…DAFVVRRLNL (278 aa)) are amidoligase domain. A CTP-binding site is contributed by Ser-20. Residue Ser-20 participates in UTP binding. ATP is bound by residues 21-26 (SLGKGL) and Asp-78. Mg(2+) is bound by residues Asp-78 and Glu-152. Residues 159-161 (DIE), 199-204 (KTKPTQ), and Lys-235 each bind CTP. UTP contacts are provided by residues 199–204 (KTKPTQ) and Lys-235. The region spanning 303–551 (RIALVGKYVE…VGAAIDYKAG (249 aa)) is the Glutamine amidotransferase type-1 domain. Residue Gly-366 participates in L-glutamine binding. Cys-393 (nucleophile; for glutamine hydrolysis) is an active-site residue. L-glutamine is bound by residues 394–397 (LGLQ), Glu-416, and Arg-477. Catalysis depends on residues His-524 and Glu-526. The interval 560 to 586 (EIPEHTPNGSSHRDGVGQPLPEPASRG) is disordered.

This sequence belongs to the CTP synthase family. As to quaternary structure, homotetramer.

It catalyses the reaction UTP + L-glutamine + ATP + H2O = CTP + L-glutamate + ADP + phosphate + 2 H(+). The enzyme catalyses L-glutamine + H2O = L-glutamate + NH4(+). It carries out the reaction UTP + NH4(+) + ATP = CTP + ADP + phosphate + 2 H(+). It participates in pyrimidine metabolism; CTP biosynthesis via de novo pathway; CTP from UDP: step 2/2. With respect to regulation, allosterically activated by GTP, when glutamine is the substrate; GTP has no effect on the reaction when ammonia is the substrate. The allosteric effector GTP functions by stabilizing the protein conformation that binds the tetrahedral intermediate(s) formed during glutamine hydrolysis. Inhibited by the product CTP, via allosteric rather than competitive inhibition. Catalyzes the ATP-dependent amination of UTP to CTP with either L-glutamine or ammonia as the source of nitrogen. Regulates intracellular CTP levels through interactions with the four ribonucleotide triphosphates. The protein is CTP synthase of Mycobacterium tuberculosis (strain CDC 1551 / Oshkosh).